Reading from the N-terminus, the 59-residue chain is Gonadotropin-releasing hormone receptor (59 aa).

The Cytoplasmic segment spans residues 1 to 2 (VA). Residues 3–23 (FATSFTVCWTPYYVLGIWYWF) form a helical membrane-spanning segment. At 24 to 37 (DPEMLNRVSDPVNH) the chain is on the extracellular side. Residues 38-58 (FFFLFAFLNPCFDPLIYGYFS) form a helical membrane-spanning segment. Residue leucine 59 is a topological domain, cytoplasmic.

It belongs to the G-protein coupled receptor 1 family.

Its subcellular location is the cell membrane. Receptor for gonadotropin releasing hormone (GnRH) that mediates the action of GnRH to stimulate the secretion of the gonadotropic hormones luteinizing hormone (LH) and follicle-stimulating hormone (FSH). This receptor mediates its action by association with G-proteins that activate a phosphatidylinositol-calcium second messenger system. The protein is Gonadotropin-releasing hormone receptor (GNRHR) of Macaca mulatta (Rhesus macaque).